A 295-amino-acid polypeptide reads, in one-letter code: Hepatic leukemia factor (295 aa).

The segment covering 34–52 (LHPEDAFSKDRDKGKKLDD) has biased composition (basic and acidic residues). Disordered stretches follow at residues 34–69 (LHPE…GPTL) and 93–160 (SENG…NRNT). The region spanning 225-288 (DDKYWARRRK…GKCKNILAKY (64 aa)) is the bZIP domain. The basic motif stretch occupies residues 227–247 (KYWARRRKNNMAAKRSRDARR). The segment at 248–255 (LKENQIAI) is leucine-zipper.

It belongs to the bZIP family. PAR subfamily. As to quaternary structure, binds DNA specifically as homodimer or heterodimer with other PAR factors. In terms of tissue distribution, isoform HLF43 is abundant in brain, liver and kidney. Isoform HLF36 is expressed only in the liver. Both isoforms accumulate in the liver with different circadian amplitudes. Isoform HLF36 reaches peak expression levels between 8 and 12 p.m. Isoform HLF43 displays a more pronounced fluctuation through the day.

The protein resides in the nucleus. The protein is Hepatic leukemia factor (Hlf) of Rattus norvegicus (Rat).